The primary structure comprises 67 residues: MPGVYLNEDDYNFDIALRRFKKQVEKAGILSEMKKRQHYEKPSVMRKKKKAAARKRLLKKIRKMNMA.

The protein belongs to the bacterial ribosomal protein bS21 family.

The polypeptide is Small ribosomal subunit protein bS21 (Nitratidesulfovibrio vulgaris (strain DP4) (Desulfovibrio vulgaris)).